Consider the following 492-residue polypeptide: Membrane-bound glycerophospholipid O-acyltransferase 1 (492 aa).

6 consecutive transmembrane segments (helical) span residues 33 to 53 (VNFVACQLFALSAAFWFRIYL), 69 to 89 (ILGIYFVVFCFGWYAVHLFVL), 125 to 145 (IYIFHYGILTTDFSGPLMIVT), 179 to 199 (PSLLEYLSYHLNFMSVIAGPC), 237 to 257 (MGAVIQKLCVTLMSLLLFLTL), and 296 to 316 (YFAWTLADAVHNAAGFGFNGM). Catalysis depends on residues Asn349 and His380. Transmembrane regions (helical) follow at residues 370 to 390 (VLTFLLSALWHGVYPGYYFTF), 423 to 443 (VVTWAVTQLAVSYTAAPFVML), and 452 to 472 (YKSVFFFLHIICLLIILFLPI). Position 486 is a phosphoserine (Ser486).

Belongs to the membrane-bound acyltransferase family. Highly expressed in stomach, epididymis, and colon.

It is found in the endoplasmic reticulum membrane. It catalyses the reaction a 1-acyl-sn-glycero-3-phosphoethanolamine + an acyl-CoA = a 1,2-diacyl-sn-glycero-3-phosphoethanolamine + CoA. The enzyme catalyses a 1-acyl-sn-glycero-3-phospho-L-serine + an acyl-CoA = a 1,2-diacyl-sn-glycero-3-phospho-L-serine + CoA. The catalysed reaction is a 1-acyl-sn-glycero-3-phosphocholine + an acyl-CoA = a 1,2-diacyl-sn-glycero-3-phosphocholine + CoA. It carries out the reaction a 1-O-(1Z-alkenyl)-sn-glycero-3-phosphoethanolamine + (9Z)-octadecenoyl-CoA = 1-O-(1Z)-alkenyl-2-(9Z)-octadecenoyl-sn-glycero-3-phosphoethanolamine + CoA. It catalyses the reaction 1-octadecanoyl-sn-glycero-3-phosphoethanolamine + (9Z)-octadecenoyl-CoA = 1-octadecanoyl-2-(9Z-octadecenoyl)-sn-glycero-3-phosphoethanolamine + CoA. The enzyme catalyses 1-(9Z-octadecenoyl)-sn-glycero-3-phospho-L-serine + (9Z)-octadecenoyl-CoA = 1,2-di-(9Z)-octadecenoyl-sn-glycero-3-phospho-L-serine + CoA. The catalysed reaction is 1-(9Z-octadecenoyl)-sn-glycero-3-phosphoethanolamine + (9Z)-octadecenoyl-CoA = 1,2-di-(9Z-octadecenoyl)-sn-glycero-3-phosphoethanolamine + CoA. It carries out the reaction 1-hexadecanoyl-sn-glycero-3-phosphoethanolamine + (9Z)-octadecenoyl-CoA = 1-hexadecanoyl-2-(9Z-octadecenoyl)-sn-glycero-3-phosphoethanolamine + CoA. It catalyses the reaction 1-(10Z-heptadecenoyl)-sn-glycero-3-phosphoethanolamine + hexadecanoyl-CoA = 1-(10Z-heptadecenoyl)-2-hexadecanoyl-sn-glycero-3-phosphoethanolamine + CoA. The enzyme catalyses 1-(9Z-octadecenoyl)-sn-glycero-3-phospho-L-serine + octadecanoyl-CoA = 1-(9Z-octadecenoyl)-2-octadecanoyl-sn-glycero-3-phospho-L-serine + CoA. The catalysed reaction is 1-(9Z-octadecenoyl)-sn-glycero-3-phospho-L-serine + (9Z)-hexadecenoyl-CoA = 1-(9Z-octadecenoyl)-2-(9Z-hexadecenoyl)-sn-glycero-3-phospho-L-serine + CoA. It carries out the reaction 1-(9Z-octadecenoyl)-sn-glycero-3-phospho-L-serine + (9Z,12Z)-octadecadienoyl-CoA = 1-(9Z-octadecenoyl)-2-(9Z,12Z-octadienoyl)-sn-glycero-3-phospho-L-serine + CoA. It catalyses the reaction 1-hexadecanoyl-sn-glycero-3-phosphocholine + (9Z)-octadecenoyl-CoA = 1-hexadecanoyl-2-(9Z-octadecenoyl)-sn-glycero-3-phosphocholine + CoA. The enzyme catalyses 1-(10Z-heptadecenoyl)-sn-glycero-3-phosphoethanolamine + (9Z)-octadecenoyl-CoA = 1-(10Z-heptadecenoyl)-2-(9Z-octadecenoyl)-sn-glycero-3-phosphoethanolamine + CoA. Its pathway is lipid metabolism; phospholipid metabolism. In terms of biological role, acyltransferase which catalyzes the transfer of an acyl group from an acyl-CoA towards a lysophospholipid producing a phospholipid and participates in the reacylation step of the phospholipid remodeling pathway also known as the Lands cycle. Acts on lysophosphatidylserine (1-acyl-2-hydroxy-sn-glycero-3-phospho-L-serine or LPS) and lysophosphatidylethanolamine (1-acyl-sn-glycero-3-phosphoethanolamine or LPE), and to a lesser extend lysophosphatidylcholine. Prefers oleoyl-CoA as the acyl donor and 1-oleoyl-LPE as acceptor. May play a role in neurite outgrowth during neuronal differentiation. This Mus musculus (Mouse) protein is Membrane-bound glycerophospholipid O-acyltransferase 1.